Here is a 534-residue protein sequence, read N- to C-terminus: GMP synthase [glutamine-hydrolyzing] (534 aa).

Positions 20–210 (PVLVIDFGAQ…LLVGAGCRPS (191 aa)) constitute a Glutamine amidotransferase type-1 domain. Cys-97 functions as the Nucleophile in the catalytic mechanism. Catalysis depends on residues His-184 and Glu-186. The 198-residue stretch at 211-408 (WTMINIVEEA…LGLPEDIVWR (198 aa)) folds into the GMPS ATP-PPase domain. 238-244 (SGGVDSA) is a binding site for ATP.

As to quaternary structure, homodimer.

It carries out the reaction XMP + L-glutamine + ATP + H2O = GMP + L-glutamate + AMP + diphosphate + 2 H(+). It participates in purine metabolism; GMP biosynthesis; GMP from XMP (L-Gln route): step 1/1. Catalyzes the synthesis of GMP from XMP. The chain is GMP synthase [glutamine-hydrolyzing] from Parafrankia sp. (strain EAN1pec).